The chain runs to 158 residues: UPF0758 protein YkfG (158 aa).

One can recognise an MPN domain in the interval 36-158; it reads AFTSTHAVRE…IYSFAEHGLL (123 aa). Residues H107, H109, and D120 each contribute to the Zn(2+) site. The JAMM motif signature appears at 107–120; sequence HNHPSGETTPSQAD.

The protein belongs to the UPF0758 family.

The protein is UPF0758 protein YkfG (ykfG) of Escherichia coli (strain K12).